The primary structure comprises 92 residues: Protein S100-A5 (92 aa).

EF-hand domains lie at methionine 12–methionine 47 and methionine 47–alanine 82. Residues threonine 28, glutamate 33, aspartate 60, asparagine 62, aspartate 64, glutamate 66, and glutamate 71 each coordinate Ca(2+).

It belongs to the S-100 family. As to quaternary structure, homodimer.

Binds calcium, zinc and copper. One subunit can simultaneously bind 2 calcium ions or 2 copper ions plus 1 zinc ion. Calcium and copper ions compete for the same binding sites. The protein is Protein S100-A5 (S100A5) of Homo sapiens (Human).